Reading from the N-terminus, the 353-residue chain is UPF0283 membrane protein YcjF (353 aa).

At 1–69 the chain is on the periplasmic side; it reads MTEPLKPRID…LRPKRSLWRK (69 aa). Residues 70–90 form a helical membrane-spanning segment; that stretch reads MVMGGLALFGASVVGQGVQWT. Residues 91–99 lie on the Cytoplasmic side of the membrane; the sequence is MNAWQTQDW. A helical transmembrane segment spans residues 100-120; the sequence is VALGGCAAGALIIGAGVGSVV. Residues 121 to 212 are Periplasmic-facing; the sequence is TEWRRLWRLR…ARREISRSAA (92 aa). A helical transmembrane segment spans residues 213 to 233; it reads ESTLMIAVSPLALVDMAFIAW. Over 234 to 353 the chain is Cytoplasmic; sequence RNLRLINRIA…LQKGKTPSEK (120 aa).

The protein belongs to the UPF0283 family.

The protein resides in the cell inner membrane. This is UPF0283 membrane protein YcjF (ycjF) from Escherichia coli O157:H7.